Consider the following 338-residue polypeptide: Ketol-acid reductoisomerase (NADP(+)) (338 aa).

A KARI N-terminal Rossmann domain is found at 1-181 (MKVFYDKDCD…GGGRTGIIET (181 aa)). NADP(+) is bound by residues 24–27 (YGSQ), arginine 47, serine 50, threonine 52, and 82–85 (DEFQ). The active site involves histidine 107. Residue glycine 133 participates in NADP(+) binding. Residues 182-327 (TFKDETETDL…EQLRSMMPWI (146 aa)) form the KARI C-terminal knotted domain. Mg(2+) is bound by residues aspartate 190, glutamate 194, glutamate 226, and glutamate 230. Serine 251 is a substrate binding site.

The protein belongs to the ketol-acid reductoisomerase family. Requires Mg(2+) as cofactor.

It catalyses the reaction (2R)-2,3-dihydroxy-3-methylbutanoate + NADP(+) = (2S)-2-acetolactate + NADPH + H(+). The enzyme catalyses (2R,3R)-2,3-dihydroxy-3-methylpentanoate + NADP(+) = (S)-2-ethyl-2-hydroxy-3-oxobutanoate + NADPH + H(+). Its pathway is amino-acid biosynthesis; L-isoleucine biosynthesis; L-isoleucine from 2-oxobutanoate: step 2/4. The protein operates within amino-acid biosynthesis; L-valine biosynthesis; L-valine from pyruvate: step 2/4. Its function is as follows. Involved in the biosynthesis of branched-chain amino acids (BCAA). Catalyzes an alkyl-migration followed by a ketol-acid reduction of (S)-2-acetolactate (S2AL) to yield (R)-2,3-dihydroxy-isovalerate. In the isomerase reaction, S2AL is rearranged via a Mg-dependent methyl migration to produce 3-hydroxy-3-methyl-2-ketobutyrate (HMKB). In the reductase reaction, this 2-ketoacid undergoes a metal-dependent reduction by NADPH to yield (R)-2,3-dihydroxy-isovalerate. In Pseudomonas putida (strain ATCC 700007 / DSM 6899 / JCM 31910 / BCRC 17059 / LMG 24140 / F1), this protein is Ketol-acid reductoisomerase (NADP(+)).